Reading from the N-terminus, the 170-residue chain is Myelin-associated oligodendrocyte basic protein (170 aa).

The disordered stretch occupies residues 69–170 (SRRATSPQKP…GSPTRAPRFW (102 aa)). The span at 82 to 92 (PAASPVVVRAP) shows a compositional bias: low complexity. Phosphoserine is present on residues Ser-85, Ser-98, and Ser-107. Residues 93-101 (PAKPKSPPR) form repeat 1. A compositionally biased stretch (pro residues) spans 93-114 (PAKPKSPPRPAKPRSPPIPAKP). A 3 X 9 AA approximate tandem repeats region spans residues 93 to 119 (PAKPKSPPRPAKPRSPPIPAKPRSPSR). A 2; half-length repeat occupies 105-110 (PRSPPI). Repeat 3 spans residues 111–119 (PAKPRSPSR). Basic and acidic residues predominate over residues 118–130 (SRTERQPRPRPEV). Residues 138–151 (KPPQKSKQPARSSP) show a composition bias toward low complexity.

Expressed predominantly in oligodendrocytes, in CNS myelin of the cerebrum and spinal cord. No expression seen in sciatic nerve.

It is found in the cytoplasm. Its subcellular location is the perinuclear region. Its function is as follows. May play a role in compacting or stabilizing the myelin sheath, possibly by binding the negatively charged acidic phospholipids of the cytoplasmic membrane. The polypeptide is Myelin-associated oligodendrocyte basic protein (Mobp) (Rattus norvegicus (Rat)).